We begin with the raw amino-acid sequence, 496 residues long: NADP-dependent glyceraldehyde-3-phosphate dehydrogenase (496 aa).

Substrate is bound by residues arginine 116 and 169–170; that span reads NY. NADP(+) contacts are provided by lysine 192, threonine 195, and aspartate 230. 245–249 provides a ligand contact to NAD(+); sequence GGDTG. Residue glutamate 264 is the Proton acceptor of the active site. Residue 297–299 coordinates substrate; sequence RCT. Cysteine 298 (nucleophile) is an active-site residue. Glutamate 391 is an NADP(+) binding site. Arginine 451 is a substrate binding site.

It belongs to the aldehyde dehydrogenase family.

It localises to the cytoplasm. It carries out the reaction D-glyceraldehyde 3-phosphate + NADP(+) + H2O = (2R)-3-phosphoglycerate + NADPH + 2 H(+). In terms of biological role, important as a means of generating NADPH for biosynthetic reactions. The protein is NADP-dependent glyceraldehyde-3-phosphate dehydrogenase (GAPN) of Nicotiana plumbaginifolia (Leadwort-leaved tobacco).